Consider the following 150-residue polypeptide: UPF0201 protein APE_1751 (150 aa).

This sequence belongs to the UPF0201 family.

In Aeropyrum pernix (strain ATCC 700893 / DSM 11879 / JCM 9820 / NBRC 100138 / K1), this protein is UPF0201 protein APE_1751.